A 404-amino-acid chain; its full sequence is Formate-dependent phosphoribosylglycinamide formyltransferase (404 aa).

Residues 25–26 (EL) and Glu85 each bind N(1)-(5-phospho-beta-D-ribosyl)glycinamide. ATP contacts are provided by residues Arg118, Lys159, 164-169 (SSGKGQ), 199-202 (EGFV), and Glu207. The ATP-grasp domain occupies 123–318 (RLAAEELGLP…EFELHARAIL (196 aa)). Positions 277 and 289 each coordinate Mg(2+). N(1)-(5-phospho-beta-D-ribosyl)glycinamide contacts are provided by residues Asp296, Lys365, and 372 to 373 (RR).

The protein belongs to the PurK/PurT family. Homodimer.

The catalysed reaction is N(1)-(5-phospho-beta-D-ribosyl)glycinamide + formate + ATP = N(2)-formyl-N(1)-(5-phospho-beta-D-ribosyl)glycinamide + ADP + phosphate + H(+). It participates in purine metabolism; IMP biosynthesis via de novo pathway; N(2)-formyl-N(1)-(5-phospho-D-ribosyl)glycinamide from N(1)-(5-phospho-D-ribosyl)glycinamide (formate route): step 1/1. Its function is as follows. Involved in the de novo purine biosynthesis. Catalyzes the transfer of formate to 5-phospho-ribosyl-glycinamide (GAR), producing 5-phospho-ribosyl-N-formylglycinamide (FGAR). Formate is provided by PurU via hydrolysis of 10-formyl-tetrahydrofolate. The protein is Formate-dependent phosphoribosylglycinamide formyltransferase of Burkholderia thailandensis (strain ATCC 700388 / DSM 13276 / CCUG 48851 / CIP 106301 / E264).